The following is a 268-amino-acid chain: Lipase 1 (268 aa).

Positions 1-29 (MRRFRLVGFLSSLVLAAGAALTGAATAQA) are cleaved as a signal peptide. Serine 44 (nucleophile) is an active-site residue. Cystine bridges form between cysteine 61-cysteine 86, cysteine 127-cysteine 135, and cysteine 185-cysteine 231. Histidine 250 is a catalytic residue.

It belongs to the 'GDSL' lipolytic enzyme family. In terms of assembly, monomer.

The protein resides in the secreted. It carries out the reaction a triacylglycerol + H2O = a diacylglycerol + a fatty acid + H(+). Strongly inhibited by Ag(+). The cations Ca(2+), Mg(2+), Co(2+) and Cu(2+) do not significantly reduce the lipolytic activity of SCO1725. Is also inhibited by DTT in vitro, but not by EDTA or by the reagent masking SH-groups, p-hydroxymercuribenzoate (pHMB). Is resistant to PMSF inhibition, except in the presence of Ca(2+). Is also strongly inhibited by 3,4-dichloroisocoumarin (DCI), another inhibitor of serine hydrolases. Addition of tetrahydrofuran and 1,4-dioxane significantly increases (2- and 4- fold, respectively) hydrolytic activity of lipase towards p-nitrophenyl caprylate. Functionally, catalyzes the hydrolysis of fatty acid esters with a preference for mid-length acyl chain (C10-C16). Is able to hydrolyze the triacylglycerol triolein and mixed triacylglycerols from a wide range of natural oils; better activity is obtained with corn-, wheat germ- and olive oil that have higher content of linoleic and/or oleic acid (C18:2; C18:1, cis). Tween detergents are also substrates for this enzyme. Displays arylesterase activity towards p-nitrophenyl alkanoate esters and alpha- and beta-naphthyl esters. This chain is Lipase 1, found in Streptomyces coelicolor (strain ATCC BAA-471 / A3(2) / M145).